The primary structure comprises 172 residues: Small ribosomal subunit protein uS5 (172 aa).

The S5 DRBM domain occupies 17–80 (LREKMIAVNR…EEARRNMVKV (64 aa)).

This sequence belongs to the universal ribosomal protein uS5 family. As to quaternary structure, part of the 30S ribosomal subunit. Contacts proteins S4 and S8.

Its function is as follows. With S4 and S12 plays an important role in translational accuracy. Functionally, located at the back of the 30S subunit body where it stabilizes the conformation of the head with respect to the body. The polypeptide is Small ribosomal subunit protein uS5 (Verminephrobacter eiseniae (strain EF01-2)).